The primary structure comprises 178 residues: Endothelin-2 (178 aa).

Positions 1-24 (MVSVPTAWCSVALALLVALHEGKD) are cleaved as a signal peptide. A propeptide spanning residues 25 to 46 (QAAATLEQPASSPRARAAHLRL) is cleaved from the precursor. 2 cysteine pairs are disulfide-bonded: C49/C63 and C51/C59. Positions 70–178 (VNTPGQTAPY…RTTHSRHRKR (109 aa)) are excised as a propeptide. The interval 96 to 111 (CECSSARDPACATFCH) is endothelin-like. The tract at residues 154 to 178 (KTHFAKRQQEATREPRTTHSRHRKR) is disordered. Residues 160 to 170 (RQQEATREPRT) are compositionally biased toward basic and acidic residues.

This sequence belongs to the endothelin/sarafotoxin family.

The protein localises to the secreted. Functionally, endothelins are endothelium-derived vasoconstrictor peptides. The sequence is that of Endothelin-2 (EDN2) from Oryctolagus cuniculus (Rabbit).